Reading from the N-terminus, the 91-residue chain is UPF0250 protein NGK_1021 (91 aa).

This sequence belongs to the UPF0250 family.

In Neisseria gonorrhoeae (strain NCCP11945), this protein is UPF0250 protein NGK_1021.